The following is a 309-amino-acid chain: Carboxylesterase Culp6 homolog (309 aa).

Residues 5–25 (ITVIAVLIVLALIGVGIVQYV) form a helical membrane-spanning segment. A disulfide bridge links C55 with C146. Active-site residues include S157, D253, and H279. An intrachain disulfide couples C249 to C256.

Belongs to the cutinase family.

The protein resides in the cell membrane. It carries out the reaction a butanoate ester + H2O = an aliphatic alcohol + butanoate + H(+). Its activity is regulated as follows. Inhibited by tetrahydrolipstatin (THL), a specific lipase inhibitor. Its function is as follows. Esterase that may be involved in cell wall biosynthesis and/or maintenance. Hydrolyzes pNP-butyrate (C4). The protein is Carboxylesterase Culp6 homolog of Corynebacterium glutamicum (strain ATCC 13032 / DSM 20300 / JCM 1318 / BCRC 11384 / CCUG 27702 / LMG 3730 / NBRC 12168 / NCIMB 10025 / NRRL B-2784 / 534).